The following is a 662-amino-acid chain: UvrABC system protein B (662 aa).

The region spanning Asp31–Arg188 is the Helicase ATP-binding domain. Gly44–Thr51 is an ATP binding site. A Beta-hairpin motif is present at residues Tyr97 to Val120. The Helicase C-terminal domain occupies Gln435 to Ile601. Residues Lys626–Leu661 enclose the UVR domain.

The protein belongs to the UvrB family. As to quaternary structure, forms a heterotetramer with UvrA during the search for lesions. Interacts with UvrC in an incision complex.

The protein resides in the cytoplasm. Its function is as follows. The UvrABC repair system catalyzes the recognition and processing of DNA lesions. A damage recognition complex composed of 2 UvrA and 2 UvrB subunits scans DNA for abnormalities. Upon binding of the UvrA(2)B(2) complex to a putative damaged site, the DNA wraps around one UvrB monomer. DNA wrap is dependent on ATP binding by UvrB and probably causes local melting of the DNA helix, facilitating insertion of UvrB beta-hairpin between the DNA strands. Then UvrB probes one DNA strand for the presence of a lesion. If a lesion is found the UvrA subunits dissociate and the UvrB-DNA preincision complex is formed. This complex is subsequently bound by UvrC and the second UvrB is released. If no lesion is found, the DNA wraps around the other UvrB subunit that will check the other stand for damage. The sequence is that of UvrABC system protein B from Streptococcus pneumoniae serotype 19F (strain G54).